The following is a 331-amino-acid chain: Phospho-N-acetylmuramoyl-pentapeptide-transferase (331 aa).

Transmembrane regions (helical) follow at residues 7 to 27, 54 to 74, 78 to 98, 106 to 126, 133 to 153, 154 to 174, 195 to 215, 249 to 269, and 311 to 331; these read IIYTIIIGFIITLILGPLTIP, TIGGIILIMSIIITSLTSGLI, LWIALAATVAFGIIGFIDDFI, LGLRAYQKLILQGTIAVILAI, IMGTEVIVPFVGEGITIAGFT, ITQTIDLGILYIPFIVFVVVA, IIAAFFALVAMSWGYVSLAIF, AIATIAVLMNVVLIIPIVGGI, and VVIVFWVVTVILCLVGMLALS.

This sequence belongs to the glycosyltransferase 4 family. MraY subfamily. It depends on Mg(2+) as a cofactor.

The protein resides in the cell membrane. It catalyses the reaction UDP-N-acetyl-alpha-D-muramoyl-L-alanyl-gamma-D-glutamyl-meso-2,6-diaminopimeloyl-D-alanyl-D-alanine + di-trans,octa-cis-undecaprenyl phosphate = di-trans,octa-cis-undecaprenyl diphospho-N-acetyl-alpha-D-muramoyl-L-alanyl-D-glutamyl-meso-2,6-diaminopimeloyl-D-alanyl-D-alanine + UMP. It participates in cell wall biogenesis; peptidoglycan biosynthesis. Its function is as follows. Catalyzes the initial step of the lipid cycle reactions in the biosynthesis of the cell wall peptidoglycan: transfers peptidoglycan precursor phospho-MurNAc-pentapeptide from UDP-MurNAc-pentapeptide onto the lipid carrier undecaprenyl phosphate, yielding undecaprenyl-pyrophosphoryl-MurNAc-pentapeptide, known as lipid I. The protein is Phospho-N-acetylmuramoyl-pentapeptide-transferase of Alkaliphilus metalliredigens (strain QYMF).